The following is a 34-amino-acid chain: Photosystem II reaction center protein Psb30 (34 aa).

The helical transmembrane segment at Val-6 to Val-26 threads the bilayer.

The protein belongs to the Psb30/Ycf12 family. PSII is composed of 1 copy each of membrane proteins PsbA, PsbB, PsbC, PsbD, PsbE, PsbF, PsbH, PsbI, PsbJ, PsbK, PsbL, PsbM, PsbT, PsbX, PsbY, PsbZ, Psb30/Ycf12, peripheral proteins of the oxygen-evolving complex and a large number of cofactors. It forms dimeric complexes.

It is found in the plastid. The protein resides in the chloroplast thylakoid membrane. Functionally, a core subunit of photosystem II (PSII), probably helps stabilize the reaction center. This is Photosystem II reaction center protein Psb30 from Gracilaria tenuistipitata var. liui (Red alga).